The chain runs to 351 residues: MAAAPLKVCIVGSGNWGSAVAKIIGNNVKKLQKFASTVKMWVFEETVNGRKLTDIINNDHENVKYLPGHKLPENVVAISNLSEAVQDADLLVFVIPHQFIHRICDEITGRVPKKALGITLIKGIDEGPEGLKLISDIIREKMGIDISVLMGANIANEVAAEKFCETTIGSKVMENGLLFKELLQTPNFRITVVDDADTVELCGALKNIVAVGAGFCDGLRCGDNTKAAVIRLGLMEMIAFARIFCKGQVSTATFLESCGVADLITTCYGGRNRRVAEAFARTGKTIEELEKEMLNGQKLQGPQTSAEVYRILKQKGLLDKFPLFTAVYQICYESRPVQGMLSCLQSHPEHT.

12 to 17 (GSGNWG) serves as a coordination point for NAD(+). Lys-122 is a binding site for substrate. Ala-155 contacts NAD(+). The active-site Proton acceptor is Lys-206. NAD(+)-binding residues include Arg-271, Lys-298, and Gln-300. Residue 271 to 272 (RN) participates in substrate binding.

Belongs to the NAD-dependent glycerol-3-phosphate dehydrogenase family. In terms of assembly, interacts with SCN5A.

The protein resides in the cytoplasm. The catalysed reaction is sn-glycerol 3-phosphate + NAD(+) = dihydroxyacetone phosphate + NADH + H(+). Functionally, plays a role in regulating cardiac sodium current; decreased enzymatic activity with resulting increased levels of glycerol 3-phosphate activating the DPD1L-dependent SCN5A phosphorylation pathway, may ultimately lead to decreased sodium current; cardiac sodium current may also be reduced due to alterations of NAD(H) balance induced by DPD1L. The polypeptide is Glycerol-3-phosphate dehydrogenase 1-like protein (GPD1L) (Pongo abelii (Sumatran orangutan)).